A 409-amino-acid chain; its full sequence is Peptidase T (409 aa).

Zn(2+) is bound at residue histidine 78. The active site involves aspartate 80. Aspartate 140 provides a ligand contact to Zn(2+). The active-site Proton acceptor is glutamate 174. 3 residues coordinate Zn(2+): glutamate 175, aspartate 197, and histidine 379.

Belongs to the peptidase M20B family. Zn(2+) is required as a cofactor.

It localises to the cytoplasm. The enzyme catalyses Release of the N-terminal residue from a tripeptide.. Functionally, cleaves the N-terminal amino acid of tripeptides. This is Peptidase T from Aliivibrio salmonicida (strain LFI1238) (Vibrio salmonicida (strain LFI1238)).